The following is a 248-amino-acid chain: Oligo(A)/oligo(T)-binding protein (248 aa).

Residues Met-1–Arg-36 mediate DNA binding. 2 disordered regions span residues Met-1–Gln-127 and Thr-219–Ile-248. 3 tandem repeats follow at residues Gly-8–Gly-12, Gly-14–Gly-18, and Gly-26–Gly-30. Positions Gly-8–Gly-30 are 3 X 5 AA repeats of G-R-K-P-G. Residues Gly-12–Lys-21 show a composition bias toward basic residues. Over residues Gln-37–Thr-71 the composition is skewed to basic and acidic residues. Composition is skewed to low complexity over residues His-72–Ser-100 and Gln-111–Gln-127.

As to quaternary structure, binds as a dimer or higher oligomer.

DNA-binding protein that recognizes oligo(A).oligo(T) tracts (A.T DNA). Can bind to any 11 bp sequence in which 10 bases conform to an uninterrupted oligo(A).oligo(T) tract. The sequence is that of Oligo(A)/oligo(T)-binding protein (DAT1) from Saccharomyces cerevisiae (strain ATCC 204508 / S288c) (Baker's yeast).